The chain runs to 339 residues: Phosphoribosylformylglycinamidine cyclo-ligase (339 aa).

Belongs to the AIR synthase family.

The protein localises to the cytoplasm. The catalysed reaction is 2-formamido-N(1)-(5-O-phospho-beta-D-ribosyl)acetamidine + ATP = 5-amino-1-(5-phospho-beta-D-ribosyl)imidazole + ADP + phosphate + H(+). It participates in purine metabolism; IMP biosynthesis via de novo pathway; 5-amino-1-(5-phospho-D-ribosyl)imidazole from N(2)-formyl-N(1)-(5-phospho-D-ribosyl)glycinamide: step 2/2. This Fusobacterium nucleatum subsp. nucleatum (strain ATCC 25586 / DSM 15643 / BCRC 10681 / CIP 101130 / JCM 8532 / KCTC 2640 / LMG 13131 / VPI 4355) protein is Phosphoribosylformylglycinamidine cyclo-ligase.